Reading from the N-terminus, the 281-residue chain is Undecaprenyl-diphosphatase 1 (281 aa).

Transmembrane regions (helical) follow at residues 95–115, 119–139, 152–172, 195–215, 227–247, and 256–276; these read WMVI…KDLI, FRNL…FILA, LTMK…IPGV, FSFL…LPDA, LQLL…IAWL, and FAWF…LLGT.

It belongs to the UppP family.

Its subcellular location is the cell membrane. It catalyses the reaction di-trans,octa-cis-undecaprenyl diphosphate + H2O = di-trans,octa-cis-undecaprenyl phosphate + phosphate + H(+). Its function is as follows. Catalyzes the dephosphorylation of undecaprenyl diphosphate (UPP). Confers resistance to bacitracin. The protein is Undecaprenyl-diphosphatase 1 of Corynebacterium jeikeium (strain K411).